A 695-amino-acid polypeptide reads, in one-letter code: MADIKTGIFAKNVQKRLNRAQEKVLQKLGKADETKDEQFEEYVQNFKRQEAEGTRLQRELRGYLAAIKGMQEASMKLTESLHEVYEPDWYGREDVKMVGEKCDVLWEDFHQKLVDGSLLTLDTYLGQFPDIKNRIAKRSRKLVDYDSARHHLEALQSSKRKDESRISKAEEEFQKAQKVFEEFNVDLQEELPSLWSRRVGFYVNTFKNVSSLEAKFHKEIAVLCHKLYEVMTKLGDQHADKAFTIQGAPSDSGPLRIAKTPSPPEEPSPLPSPTASPNHTLAPASPAPARPRSPSQTRKGPPVPPLPKVTPTKELQQENIISFFEDNFVPEISVTTPSQNEVPEVKKEETLLDLDFDPFKPEVTPAGSAGVTHSPMSQTLPWDLWTTSTDLVQPASGGSFNGFTQPQDTSLFTMQTDQSMICNLAESEQAPPTEPKAEEPLAAVTPAVGLDLGMDTRAEEPVEEAVIIPGADADAAVGTLVSAAEGAPGEEAEAEKATVPAGEGVSLEEAKIGTETTEGAESAQPEAEELEATVPQEKVIPSVVIEPASNHEEEGENEITIGAEPKETTEDAAPPGPTSETPELATEQKPIQDPQPTPSAPAMGAADQLASAREASQELPPGFLYKVETLHDFEAANSDELTLQRGDVVLVVPSDSEADQDAGWLVGVKESDWLQYRDLATYKGLFPENFTRRLD.

Coiled-coil stretches lie at residues 10 to 83 (AKNV…SLHE) and 144 to 191 (DYDS…QEEL). In terms of domain architecture, BAR spans 24–240 (VLQKLGKADE…MTKLGDQHAD (217 aa)). Disordered regions lie at residues 244–312 (TIQG…VTPT) and 486–617 (GAPG…EASQ). Ser-252 carries the post-translational modification Phosphoserine. Thr-260 carries the post-translational modification Phosphothreonine. A compositionally biased stretch (pro residues) spans 261–274 (PSPPEEPSPLPSPT). A phosphoserine mark is found at Ser-262, Ser-268, Ser-272, and Ser-276. Thr-280 is modified (phosphothreonine). 2 positions are modified to phosphoserine: Ser-506 and Ser-638. Residues 622–695 (GFLYKVETLH…FPENFTRRLD (74 aa)) form the SH3 domain.

As to quaternary structure, heterodimer with BIN1. Binds SH3GLB1. Interacts with REPS1 and SGIP1. Binds AP2A2. Interacts with AP2B1. Interacts with DNM1 and SYNJ1. In terms of tissue distribution, neurons, certain endocrine cell types and spermatocytes.

Its subcellular location is the cytoplasmic vesicle. It is found in the secretory vesicle. The protein localises to the synaptic vesicle membrane. The protein resides in the cytoplasm. It localises to the cytoskeleton. In terms of biological role, may participate in mechanisms of regulated exocytosis in synapses and certain endocrine cell types. May control the properties of the membrane associated cytoskeleton. This is Amphiphysin (AMPH) from Homo sapiens (Human).